Reading from the N-terminus, the 158-residue chain is 2-C-methyl-D-erythritol 2,4-cyclodiphosphate synthase (158 aa).

A divalent metal cation is bound by residues D9 and H11. Residues 9 to 11 and 35 to 36 each bind 4-CDP-2-C-methyl-D-erythritol 2-phosphate; these read DVH and HS. H43 contributes to the a divalent metal cation binding site. 4-CDP-2-C-methyl-D-erythritol 2-phosphate is bound by residues 57 to 59, 62 to 66, 133 to 136, F140, and R143; these read DIG, FPDTD, and TTSE.

The protein belongs to the IspF family. As to quaternary structure, homotrimer. Requires a divalent metal cation as cofactor.

The catalysed reaction is 4-CDP-2-C-methyl-D-erythritol 2-phosphate = 2-C-methyl-D-erythritol 2,4-cyclic diphosphate + CMP. It functions in the pathway isoprenoid biosynthesis; isopentenyl diphosphate biosynthesis via DXP pathway; isopentenyl diphosphate from 1-deoxy-D-xylulose 5-phosphate: step 4/6. Functionally, involved in the biosynthesis of isopentenyl diphosphate (IPP) and dimethylallyl diphosphate (DMAPP), two major building blocks of isoprenoid compounds. Catalyzes the conversion of 4-diphosphocytidyl-2-C-methyl-D-erythritol 2-phosphate (CDP-ME2P) to 2-C-methyl-D-erythritol 2,4-cyclodiphosphate (ME-CPP) with a corresponding release of cytidine 5-monophosphate (CMP). This chain is 2-C-methyl-D-erythritol 2,4-cyclodiphosphate synthase, found in Pasteurella multocida (strain Pm70).